The following is a 208-amino-acid chain: Thymidylate kinase (208 aa).

Residue 10 to 17 (GPEGSGKT) participates in ATP binding.

This sequence belongs to the thymidylate kinase family.

The enzyme catalyses dTMP + ATP = dTDP + ADP. Phosphorylation of dTMP to form dTDP in both de novo and salvage pathways of dTTP synthesis. The sequence is that of Thymidylate kinase from Bacillus cereus (strain B4264).